Consider the following 323-residue polypeptide: Putative CRISPR-associated protein SSO1401 (323 aa).

In terms of assembly, sometimes seen associated with the aCascade ribonucleoprotein complex, minimally composed of Csa2 and Cas5a, which binds crRNA. Other probable components of aCascade in strain P1 are Cas6 and Csa5, while SSO1399, Cas5b (SSO1400) and SSO1401 have sometimes been seen weakly associated. The Csa2-Cas5a-crRNA complex also binds target DNA homologous to crRNA, probably forming an R-loop. Purified aCascade forms a filament about 6 nm in width.

CRISPR (clustered regularly interspaced short palindromic repeat) is an adaptive immune system that provides protection against mobile genetic elements (viruses, transposable elements and conjugative plasmids). CRISPR clusters contain spacers, sequences complementary to antecedent mobile elements, and target invading nucleic acids. CRISPR clusters are transcribed and processed into CRISPR RNA (crRNA). This is Putative CRISPR-associated protein SSO1401 from Saccharolobus solfataricus (strain ATCC 35092 / DSM 1617 / JCM 11322 / P2) (Sulfolobus solfataricus).